Reading from the N-terminus, the 224-residue chain is Precorrin-2 dehydrogenase (224 aa).

NAD(+)-binding positions include serine 26–valine 27 and glutamate 47–glutamine 50.

Belongs to the precorrin-2 dehydrogenase / sirohydrochlorin ferrochelatase family. Homodimer.

It carries out the reaction precorrin-2 + NAD(+) = sirohydrochlorin + NADH + 2 H(+). Its pathway is porphyrin-containing compound metabolism; siroheme biosynthesis; sirohydrochlorin from precorrin-2: step 1/1. Involved in the archaeal biosynthesis of heme. Catalyzes the oxiation of precorrin-2 into sirohydroclorin. The sequence is that of Precorrin-2 dehydrogenase from Methanosarcina barkeri (strain Fusaro / DSM 804).